Reading from the N-terminus, the 142-residue chain is Large ribosomal subunit protein uL13 (142 aa).

It belongs to the universal ribosomal protein uL13 family. Part of the 50S ribosomal subunit.

Its function is as follows. This protein is one of the early assembly proteins of the 50S ribosomal subunit, although it is not seen to bind rRNA by itself. It is important during the early stages of 50S assembly. The polypeptide is Large ribosomal subunit protein uL13 (Psychrobacter sp. (strain PRwf-1)).